We begin with the raw amino-acid sequence, 457 residues long: Multidrug resistance protein MdtK (457 aa).

Helical transmembrane passes span 11 to 31 (LLAL…MGVV), 53 to 73 (IWLP…PIIA), 93 to 113 (WLAI…KFLI), 127 to 147 (AVGF…YQVL), 160 to 180 (GMVI…IFIY), 188 to 208 (LGGV…FLLM), 243 to 263 (LPIA…ALLI), 280 to 300 (FSSL…IRVG), 316 to 336 (YTGI…SIIL), 357 to 377 (LMLF…GAGV), 387 to 407 (IFYI…YILG), and 418 to 438 (PQGF…MIFA).

The protein belongs to the multi antimicrobial extrusion (MATE) (TC 2.A.66.1) family. MdtK subfamily.

The protein resides in the cell inner membrane. Its function is as follows. Multidrug efflux pump that functions probably as a Na(+)/drug antiporter. This Photorhabdus laumondii subsp. laumondii (strain DSM 15139 / CIP 105565 / TT01) (Photorhabdus luminescens subsp. laumondii) protein is Multidrug resistance protein MdtK.